The sequence spans 1323 residues: PAS domain-containing serine/threonine-protein kinase (1323 aa).

An N-acetylmethionine modification is found at Met-1. A Phosphoserine modification is found at Ser-19. Residues 20 to 47 form a disordered region; the sequence is LPLPVSAEGPAAQTTAEPSRSFSSAHRH. A compositionally biased stretch (polar residues) spans 31-43; that stretch reads AQTTAEPSRSFSS. Residue Thr-34 is modified to Phosphothreonine. 2 PAS domains span residues 119-190 and 335-402; these read SSPL…MEAD and YRAS…SLQL. Position 582 is a phosphoserine (Ser-582). A disordered region spans residues 837-857; that stretch reads AASDRESPGHVPSTLDAGPED. A Phosphoserine modification is found at Ser-939. Residues 999–1251 form the Protein kinase domain; that stretch reads YSTMSPLGSG…LEKLVTDPWV (253 aa). ATP-binding positions include 1005–1013, Lys-1028, and 1082–1089; these read LGSGAFGFV and EKHGSGLD. Asp-1128 acts as the Proton acceptor in catalysis. An ATP-binding site is contributed by Asp-1146. Phosphothreonine; by autocatalysis occurs at positions 1161 and 1165. A disordered region spans residues 1298-1323; that stretch reads CGGPVPGEAPNGQGCLHPGDPRLLTS.

It belongs to the protein kinase superfamily. CAMK Ser/Thr protein kinase family. Post-translationally, autophosphorylated on Thr-1161 and Thr-1165. Autophosphorylation is activated by phospholipids. In terms of tissue distribution, ubiquitously expressed, with slightly higher expression in brain, prostate and testis. Reduced expression was found in placenta. Present in germ cells of testis and in the midpiece of sperm tails (at protein level).

Its subcellular location is the cytoplasm. The protein localises to the nucleus. The catalysed reaction is L-seryl-[protein] + ATP = O-phospho-L-seryl-[protein] + ADP + H(+). It carries out the reaction L-threonyl-[protein] + ATP = O-phospho-L-threonyl-[protein] + ADP + H(+). Protein kinase activity is inhibited by the first PAS domain: binding of an unidentified ligand desinhibits the protein kinase activity. May be activated by autophosphorylation on Thr-1161 and Thr-1165. The activating role of autophosphorylation at Thr-1161 is unclear: according to a report, autophosphorylation at Thr-1161 does not play a major role in activation. Autophosphorylation is enhanced upon phosphatidylinositol monophosphate (phosphatidylinositol 4-phosphate) binding and inhibited upon phosphatidylinositol bi- and tri-phosphate binding. In contrast, phosphorylation of target proteins is inhibited upon all phosphatidylinositol-binding (phosphatidylinositol mono- bi- and tri-phosphate). Serine/threonine-protein kinase involved in energy homeostasis and protein translation. Phosphorylates EEF1A1, GYS1, PDX1 and RPS6. Probably plays a role under changing environmental conditions (oxygen, glucose, nutrition), rather than under standard conditions. Acts as a sensor involved in energy homeostasis: regulates glycogen synthase synthesis by mediating phosphorylation of GYS1, leading to GYS1 inactivation. May be involved in glucose-stimulated insulin production in pancreas and regulation of glucagon secretion by glucose in alpha cells; however such data require additional evidences. May play a role in regulation of protein translation by phosphorylating EEF1A1, leading to increase translation efficiency. May also participate in respiratory regulation. This chain is PAS domain-containing serine/threonine-protein kinase (PASK), found in Homo sapiens (Human).